A 333-amino-acid chain; its full sequence is Flotillin-like protein FloA (333 aa).

Residues 9–29 traverse the membrane as a helical segment; it reads IVLIVGGIIFLILFFHYVPFF.

Belongs to the flotillin-like FloA family. As to quaternary structure, homooligomerizes.

The protein localises to the cell membrane. It is found in the membrane raft. Functionally, found in functional membrane microdomains (FMM) that may be equivalent to eukaryotic membrane rafts. FMMs are highly dynamic and increase in number as cells age. Flotillins are thought to be important factors in membrane fluidity. The sequence is that of Flotillin-like protein FloA from Bacteroides thetaiotaomicron (strain ATCC 29148 / DSM 2079 / JCM 5827 / CCUG 10774 / NCTC 10582 / VPI-5482 / E50).